The chain runs to 471 residues: Argininosuccinate lyase (471 aa).

It belongs to the lyase 1 family. Argininosuccinate lyase subfamily.

The protein resides in the cytoplasm. The enzyme catalyses 2-(N(omega)-L-arginino)succinate = fumarate + L-arginine. It participates in amino-acid biosynthesis; L-arginine biosynthesis; L-arginine from L-ornithine and carbamoyl phosphate: step 3/3. This chain is Argininosuccinate lyase, found in Ralstonia pickettii (strain 12J).